The following is a 207-amino-acid chain: Thiamine-phosphate synthase (207 aa).

Residues 37–41 (QYRDK) and N69 each bind 4-amino-2-methyl-5-(diphosphooxymethyl)pyrimidine. Positions 70 and 89 each coordinate Mg(2+). S108 serves as a coordination point for 4-amino-2-methyl-5-(diphosphooxymethyl)pyrimidine. 135–137 (SRT) contacts 2-[(2R,5Z)-2-carboxy-4-methylthiazol-5(2H)-ylidene]ethyl phosphate. Residue K138 participates in 4-amino-2-methyl-5-(diphosphooxymethyl)pyrimidine binding. Residue G164 coordinates 2-[(2R,5Z)-2-carboxy-4-methylthiazol-5(2H)-ylidene]ethyl phosphate.

Belongs to the thiamine-phosphate synthase family. Mg(2+) is required as a cofactor.

The enzyme catalyses 2-[(2R,5Z)-2-carboxy-4-methylthiazol-5(2H)-ylidene]ethyl phosphate + 4-amino-2-methyl-5-(diphosphooxymethyl)pyrimidine + 2 H(+) = thiamine phosphate + CO2 + diphosphate. The catalysed reaction is 2-(2-carboxy-4-methylthiazol-5-yl)ethyl phosphate + 4-amino-2-methyl-5-(diphosphooxymethyl)pyrimidine + 2 H(+) = thiamine phosphate + CO2 + diphosphate. It carries out the reaction 4-methyl-5-(2-phosphooxyethyl)-thiazole + 4-amino-2-methyl-5-(diphosphooxymethyl)pyrimidine + H(+) = thiamine phosphate + diphosphate. It functions in the pathway cofactor biosynthesis; thiamine diphosphate biosynthesis; thiamine phosphate from 4-amino-2-methyl-5-diphosphomethylpyrimidine and 4-methyl-5-(2-phosphoethyl)-thiazole: step 1/1. Condenses 4-methyl-5-(beta-hydroxyethyl)thiazole monophosphate (THZ-P) and 2-methyl-4-amino-5-hydroxymethyl pyrimidine pyrophosphate (HMP-PP) to form thiamine monophosphate (TMP). The protein is Thiamine-phosphate synthase of Chromobacterium violaceum (strain ATCC 12472 / DSM 30191 / JCM 1249 / CCUG 213 / NBRC 12614 / NCIMB 9131 / NCTC 9757 / MK).